A 243-amino-acid polypeptide reads, in one-letter code: Probable phosphatase CBO3379/CLC_3322 (243 aa).

Positions 8, 10, 16, 41, 74, 102, 132, 192, and 194 each coordinate Zn(2+).

It belongs to the PHP family. The cofactor is Zn(2+).

The sequence is that of Probable phosphatase CBO3379/CLC_3322 from Clostridium botulinum (strain Hall / ATCC 3502 / NCTC 13319 / Type A).